The sequence spans 284 residues: Phosphate import ATP-binding protein PstB 2 (284 aa).

Positions 1–22 are enriched in polar residues; it reads MTLLSTLRGISSPARQQPGTQS. The disordered stretch occupies residues 1-29; the sequence is MTLLSTLRGISSPARQQPGTQSESRRGGD. The region spanning 36–278 is the ABC transporter domain; the sequence is LAVAGVSHGF…PDDARARKFI (243 aa). Residue 68–75 participates in ATP binding; the sequence is GPSGTGKT.

This sequence belongs to the ABC transporter superfamily. Phosphate importer (TC 3.A.1.7) family. In terms of assembly, the complex is composed of two ATP-binding proteins (PstB), two transmembrane proteins (PstC and PstA) and a solute-binding protein (PstS).

The protein localises to the cell membrane. It carries out the reaction phosphate(out) + ATP + H2O = ADP + 2 phosphate(in) + H(+). In terms of biological role, part of the ABC transporter complex PstSACB involved in phosphate import. Responsible for energy coupling to the transport system. This chain is Phosphate import ATP-binding protein PstB 2, found in Natronomonas pharaonis (strain ATCC 35678 / DSM 2160 / CIP 103997 / JCM 8858 / NBRC 14720 / NCIMB 2260 / Gabara) (Halobacterium pharaonis).